A 130-amino-acid chain; its full sequence is Large ribosomal subunit protein bL12 (130 aa).

Belongs to the bacterial ribosomal protein bL12 family. As to quaternary structure, homodimer. Part of the ribosomal stalk of the 50S ribosomal subunit. Forms a multimeric L10(L12)X complex, where L10 forms an elongated spine to which 2 to 4 L12 dimers bind in a sequential fashion. Binds GTP-bound translation factors.

Functionally, forms part of the ribosomal stalk which helps the ribosome interact with GTP-bound translation factors. Is thus essential for accurate translation. The chain is Large ribosomal subunit protein bL12 from Yersinia pestis bv. Antiqua (strain Angola).